The primary structure comprises 201 residues: Superoxide dismutase [Mn] (201 aa).

The Mn(2+) site is built by histidine 27, histidine 81, aspartate 163, and histidine 167.

It belongs to the iron/manganese superoxide dismutase family. Homodimer. The cofactor is Mn(2+).

The catalysed reaction is 2 superoxide + 2 H(+) = H2O2 + O2. Functionally, destroys superoxide anion radicals which are normally produced within the cells and which are toxic to biological systems. May play a critical role against oxidative stress, affecting both the survival and the virulence of S.pneumoniae. The protein is Superoxide dismutase [Mn] (sodA) of Streptococcus pneumoniae serotype 4 (strain ATCC BAA-334 / TIGR4).